Here is a 116-residue protein sequence, read N- to C-terminus: Large ribosomal subunit protein bL17 (116 aa).

Belongs to the bacterial ribosomal protein bL17 family. As to quaternary structure, part of the 50S ribosomal subunit. Contacts protein L32.

The protein is Large ribosomal subunit protein bL17 of Deinococcus geothermalis (strain DSM 11300 / CIP 105573 / AG-3a).